The following is a 106-amino-acid chain: UPF0060 membrane protein R01043 (106 aa).

Helical transmembrane passes span 5-25 (AIYFLAALAEITGCFAFWSWL), 31-51 (ALWLIPGMASLALFAWLLTMV), 61-81 (AAYGGVYIVASLSWLWLAEGV), and 85-105 (HWDMTGAAVALAGSAIILAGP).

The protein belongs to the UPF0060 family.

The protein localises to the cell inner membrane. The polypeptide is UPF0060 membrane protein R01043 (Rhizobium meliloti (strain 1021) (Ensifer meliloti)).